The following is an 88-amino-acid chain: Small ribosomal subunit protein uS15c (88 aa).

The protein belongs to the universal ribosomal protein uS15 family. As to quaternary structure, part of the 30S ribosomal subunit.

The protein resides in the plastid. The protein localises to the chloroplast. The polypeptide is Small ribosomal subunit protein uS15c (rps15) (Angiopteris evecta (Mule's foot fern)).